The chain runs to 29 residues: Cyclotide vibi-C (29 aa).

A cross-link (cyclopeptide (Gly-Asn)) is located at residues 1–29; sequence GLPVCGETCAFGSCYTPGCSCSWPVCTRN. Disulfide bonds link cysteine 5–cysteine 19, cysteine 9–cysteine 21, and cysteine 14–cysteine 26.

In terms of processing, this is a cyclic peptide.

Its function is as follows. Probably participates in a plant defense mechanism. This chain is Cyclotide vibi-C, found in Viola biflora (Yellow wood violet).